The sequence spans 328 residues: Glycerol-3-phosphate dehydrogenase [NAD(P)+] (328 aa).

NADPH is bound by residues tryptophan 15, arginine 35, and lysine 108. Residues lysine 108, glycine 136, and serine 138 each coordinate sn-glycerol 3-phosphate. Residue alanine 140 participates in NADPH binding. Sn-glycerol 3-phosphate is bound by residues lysine 191, aspartate 244, serine 254, arginine 255, and asparagine 256. Lysine 191 (proton acceptor) is an active-site residue. Position 255 (arginine 255) interacts with NADPH. NADPH contacts are provided by leucine 275 and glutamate 277.

The protein belongs to the NAD-dependent glycerol-3-phosphate dehydrogenase family.

The protein resides in the cytoplasm. The catalysed reaction is sn-glycerol 3-phosphate + NAD(+) = dihydroxyacetone phosphate + NADH + H(+). It catalyses the reaction sn-glycerol 3-phosphate + NADP(+) = dihydroxyacetone phosphate + NADPH + H(+). The protein operates within membrane lipid metabolism; glycerophospholipid metabolism. Its function is as follows. Catalyzes the reduction of the glycolytic intermediate dihydroxyacetone phosphate (DHAP) to sn-glycerol 3-phosphate (G3P), the key precursor for phospholipid synthesis. The protein is Glycerol-3-phosphate dehydrogenase [NAD(P)+] of Azorhizobium caulinodans (strain ATCC 43989 / DSM 5975 / JCM 20966 / LMG 6465 / NBRC 14845 / NCIMB 13405 / ORS 571).